We begin with the raw amino-acid sequence, 475 residues long: Putative poly(A) polymerase catalytic subunit (475 aa).

The protein belongs to the poxviridae poly(A) polymerase catalytic subunit family. Highly divergent.

It localises to the virion. The catalysed reaction is RNA(n) + ATP = RNA(n)-3'-adenine ribonucleotide + diphosphate. Functionally, polymerase that creates the 3'-poly(A) tail of mRNAs. This is Putative poly(A) polymerase catalytic subunit from Ornithodoros (relapsing fever ticks).